Reading from the N-terminus, the 141-residue chain is Transcription antitermination protein NusB (141 aa).

This sequence belongs to the NusB family.

In terms of biological role, involved in transcription antitermination. Required for transcription of ribosomal RNA (rRNA) genes. Binds specifically to the boxA antiterminator sequence of the ribosomal RNA (rrn) operons. In Desulfotalea psychrophila (strain LSv54 / DSM 12343), this protein is Transcription antitermination protein NusB.